The following is an 863-amino-acid chain: DNA ligase (863 aa).

NAD(+) is bound by residues 76-80 (DAAYD), 125-126 (SL), and glutamate 159. The active-site N6-AMP-lysine intermediate is lysine 161. 2 residues coordinate NAD(+): arginine 182 and glutamate 221. A disordered region spans residues 237 to 256 (EDAGRPPFANPRNAAAGSLR). The segment covering 241-253 (RPPFANPRNAAAG) has biased composition (low complexity). 2 residues coordinate NAD(+): lysine 346 and lysine 370. The Zn(2+) site is built by cysteine 467, cysteine 470, cysteine 486, and cysteine 492. The BRCT domain occupies 781–863 (GLPQTLEGKS…DTLLATGDVQ (83 aa)).

Belongs to the NAD-dependent DNA ligase family. LigA subfamily. The cofactor is Mg(2+). Requires Mn(2+) as cofactor.

It catalyses the reaction NAD(+) + (deoxyribonucleotide)n-3'-hydroxyl + 5'-phospho-(deoxyribonucleotide)m = (deoxyribonucleotide)n+m + AMP + beta-nicotinamide D-nucleotide.. DNA ligase that catalyzes the formation of phosphodiester linkages between 5'-phosphoryl and 3'-hydroxyl groups in double-stranded DNA using NAD as a coenzyme and as the energy source for the reaction. It is essential for DNA replication and repair of damaged DNA. The chain is DNA ligase from Bifidobacterium animalis subsp. lactis (strain AD011).